Here is a 323-residue protein sequence, read N- to C-terminus: D-alanine--D-alanine ligase (323 aa).

The ATP-grasp domain occupies 102–300; the sequence is KQIFRAEGIP…FTELVERMLQ (199 aa). 130–185 is an ATP binding site; the sequence is VARLGSPLVVKPSNSGSTVGISLARDEVSLAQGLALASSVSSRVFLERYIPGKEIT. Mg(2+)-binding residues include Asp254, Glu267, and Asn269.

The protein belongs to the D-alanine--D-alanine ligase family. The cofactor is Mg(2+). Mn(2+) serves as cofactor.

The protein localises to the cytoplasm. The catalysed reaction is 2 D-alanine + ATP = D-alanyl-D-alanine + ADP + phosphate + H(+). It functions in the pathway cell wall biogenesis; peptidoglycan biosynthesis. Its function is as follows. Cell wall formation. This chain is D-alanine--D-alanine ligase, found in Synechococcus sp. (strain JA-3-3Ab) (Cyanobacteria bacterium Yellowstone A-Prime).